The sequence spans 197 residues: Probable deoxycytidylate deaminase (197 aa).

The 135-residue stretch at 49-183 (KKHQRFLRIA…KMLDHARLPY (135 aa)) folds into the CMP/dCMP-type deaminase domain. Position 117 (H117) interacts with Zn(2+). E119 (proton donor) is an active-site residue. Residues C143 and C146 each coordinate Zn(2+).

This sequence belongs to the cytidine and deoxycytidylate deaminase family. Zn(2+) serves as cofactor.

The enzyme catalyses dCMP + H2O + H(+) = dUMP + NH4(+). In terms of biological role, supplies the nucleotide substrate for thymidylate synthetase. In Caenorhabditis elegans, this protein is Probable deoxycytidylate deaminase.